The primary structure comprises 1070 residues: Granule associated Rac and RHOG effector protein 1 (1070 aa).

Disordered stretches follow at residues 681–771 (EQKA…VGAG), 855–992 (SQAM…STLP), and 1032–1070 (SYVQ…LPQY). The segment covering 692 to 702 (PSLPVPPPPRA) has biased composition (pro residues). Low complexity-rich tracts occupy residues 719–742 (PQQQ…QPIG), 906–924 (AQGD…NGDS), and 951–962 (TSTLPSPPLLTT). Serine 723 carries the post-translational modification Phosphoserine. Over residues 977–992 (PKAPWQHPSPLPSTLP) the composition is skewed to pro residues. Over residues 1046 to 1058 (HKAAPKGFKAFPG) the composition is skewed to low complexity.

Interacts with AGO2 and TNRC6A.

It is found in the cytoplasm. It localises to the P-body. Its function is as follows. Acts as an effector of RAC1. Associates with CCR4-NOT complex which is one of the major cellular mRNA deadenylases and is linked to various cellular processes including bulk mRNA degradation, miRNA-mediated repression, translational repression during translational initiation and general transcription regulation. May also play a role in miRNA silencing machinery. This Homo sapiens (Human) protein is Granule associated Rac and RHOG effector protein 1.